A 272-amino-acid polypeptide reads, in one-letter code: Putative hydro-lyase BRADO2538 (272 aa).

It belongs to the D-glutamate cyclase family.

The polypeptide is Putative hydro-lyase BRADO2538 (Bradyrhizobium sp. (strain ORS 278)).